The chain runs to 274 residues: S-adenosylmethionine-dependent nucleotide dehydratase (274 aa).

The region spanning 1–215 (MAYKVNLHIT…VERHAEVSHD (215 aa)) is the Radical SAM core domain. C13, C17, and C20 together coordinate [4Fe-4S] cluster.

The protein belongs to the radical SAM superfamily. Prokaryotic viperin family. It depends on [4Fe-4S] cluster as a cofactor.

It carries out the reaction CTP + AH2 + S-adenosyl-L-methionine = 3'-deoxy-3',4'-didehydro-CTP + 5'-deoxyadenosine + L-methionine + A + H2O + H(+). Functionally, expression of pVip6 in E.coli (strain MG1655) confers resistance to phages lambda, P1, SECphi6, SECphi8 and T7. Catalyzes the conversion of cytidine triphosphate (CTP) to 3'-deoxy-3',4'-didehydro-CTP (ddhCTP), probably via a SAM-dependent radical mechanism. The modified nucleotide represses transcription from T7 RNA polymerase-directed genes (possibly by acting as chain terminators), strongly suggesting these nucleotides block viral polymerase transcription. The protein is S-adenosylmethionine-dependent nucleotide dehydratase of Selenomonas ruminantium.